The sequence spans 377 residues: N-acetyldiaminopimelate deacetylase (377 aa).

Residue Asp-69 is part of the active site. Glu-128 functions as the Proton acceptor in the catalytic mechanism.

It belongs to the peptidase M20A family. N-acetyldiaminopimelate deacetylase subfamily.

The catalysed reaction is N-acetyl-(2S,6S)-2,6-diaminopimelate + H2O = (2S,6S)-2,6-diaminopimelate + acetate. The protein operates within amino-acid biosynthesis; L-lysine biosynthesis via DAP pathway; LL-2,6-diaminopimelate from (S)-tetrahydrodipicolinate (acetylase route): step 3/3. In terms of biological role, catalyzes the conversion of N-acetyl-diaminopimelate to diaminopimelate and acetate. This Streptococcus sanguinis (strain SK36) protein is N-acetyldiaminopimelate deacetylase.